The primary structure comprises 146 residues: Pseudoazurin (146 aa).

A signal peptide spans 1–23; that stretch reads MRNIAIKFAAAGILAMLAAPALA. The region spanning 28-116 is the Plastocyanin-like domain; the sequence is VHMLNKGAEG…MGMIALIAVG (89 aa). Residues His63, Cys101, His104, and Met109 each coordinate Cu cation.

It depends on Cu cation as a cofactor.

It localises to the periplasm. Its function is as follows. This soluble electron transfer copper protein is required for the inactivation of copper-containing nitrite reductase in the presence of oxygen. Serves as a direct electron donor to the nitrite reductase. This Alcaligenes faecalis protein is Pseudoazurin.